The chain runs to 338 residues: Cytochrome f (338 aa).

An N-terminal signal peptide occupies residues 1–45; sequence MNFKVCSFPSRRQSIAAFVRVLMVILLTLGALVSSDVLLPQPAAA. Residues Tyr46, Cys66, Cys69, and His70 each contribute to the heme site. The chain crosses the membrane as a helical span at residues 300 to 316; that stretch reads IAFLAAITLTQILLVLK.

The protein belongs to the cytochrome f family. The 4 large subunits of the cytochrome b6-f complex are cytochrome b6, subunit IV (17 kDa polypeptide, PetD), cytochrome f and the Rieske protein, while the 4 small subunits are PetG, PetL, PetM and PetN. The complex functions as a dimer. Heme serves as cofactor.

Its subcellular location is the cellular thylakoid membrane. Component of the cytochrome b6-f complex, which mediates electron transfer between photosystem II (PSII) and photosystem I (PSI), cyclic electron flow around PSI, and state transitions. This chain is Cytochrome f (petA), found in Leptolyngbya laminosa (Phormidium laminosum).